A 525-amino-acid polypeptide reads, in one-letter code: Light-independent protochlorophyllide reductase subunit B (525 aa).

Position 36 (Asp-36) interacts with [4Fe-4S] cluster. The active-site Proton donor is the Asp-286. 421–422 (GL) contacts substrate.

This sequence belongs to the ChlB/BchB/BchZ family. Protochlorophyllide reductase is composed of three subunits; ChlL, ChlN and ChlB. Forms a heterotetramer of two ChlB and two ChlN subunits. [4Fe-4S] cluster serves as cofactor.

It catalyses the reaction chlorophyllide a + oxidized 2[4Fe-4S]-[ferredoxin] + 2 ADP + 2 phosphate = protochlorophyllide a + reduced 2[4Fe-4S]-[ferredoxin] + 2 ATP + 2 H2O. It participates in porphyrin-containing compound metabolism; chlorophyll biosynthesis (light-independent). In terms of biological role, component of the dark-operative protochlorophyllide reductase (DPOR) that uses Mg-ATP and reduced ferredoxin to reduce ring D of protochlorophyllide (Pchlide) to form chlorophyllide a (Chlide). This reaction is light-independent. The NB-protein (ChlN-ChlB) is the catalytic component of the complex. This Prochlorococcus marinus (strain NATL1A) protein is Light-independent protochlorophyllide reductase subunit B.